The following is a 585-amino-acid chain: Bestrophin-1 (585 aa).

Residues 1–31 lie on the Cytoplasmic side of the membrane; the sequence is MTITYTSQVANARLGSFSRLLLCWRGSIYKL. Ala-10 lines the Ca(2+) pocket. A helical membrane pass occupies residues 32-51; that stretch reads LYGEFLIFLLCYYIIRFIYR. The Extracellular segment spans residues 52–60; sequence LALTEEQQL. Residues 61 to 82 form a helical membrane-spanning segment; the sequence is MFEKLTLYCDSYIQLIPISFVL. Residues 83 to 237 are Cytoplasmic-facing; the sequence is GFYVTLVVTR…DWISIPLVYT (155 aa). A helical membrane pass occupies residues 238-255; it reads QVVTVAVYSFFLTCLVGR. Residues 256–274 are Extracellular-facing; that stretch reads QFLNPAKAYPGHELDLVVP. The chain crosses the membrane as a helical span at residues 275–288; the sequence is VFTFLQFFFYVGWL. At 289-585 the chain is on the cytoplasmic side; sequence KVAEQLINPF…ALENRDEAHS (297 aa). The Ca(2+) site is built by Gln-293, Asn-296, Asp-301, and Asp-304. The segment at 346 to 379 is auto-inhibitory segment; the sequence is PYTAASAQFRRASFMGSTFNISLNKEEMEFQPNQ.

This sequence belongs to the anion channel-forming bestrophin (TC 1.A.46) family. Calcium-sensitive chloride channel subfamily. As to quaternary structure, interacts with YWHAG; this interaction promotes the ligand-gated L-glutamate channel activity leading to the positive regulation of NMDA glutamate receptor activity through the L-glutamate secretion. Predominantly expressed in the basolateral membrane of the retinal pigment epithelium.

The protein localises to the cell membrane. It is found in the basolateral cell membrane. It catalyses the reaction chloride(in) = chloride(out). It carries out the reaction hydrogencarbonate(in) = hydrogencarbonate(out). The catalysed reaction is 4-aminobutanoate(in) = 4-aminobutanoate(out). The enzyme catalyses L-glutamate(out) = L-glutamate(in). With respect to regulation, inactivated by sulfhydryl-reactive agents. In terms of biological role, ligand-gated anion channel that allows the movement of anions across cell membranes when activated by calcium (Ca2+). Allows the movement of chloride and hydrogencarbonate. Found in a partially open conformation leading to significantly smaller chloride movement. Upon F2R/PAR-1 activation, the sequestered calcium is released into the cytosol of astrocytes, leading to the (Ca2+)-dependent release of L-glutamate into the synaptic cleft that targets the neuronal postsynaptic GRIN2A/NMDAR receptor resulting in the synaptic plasticity regulation. Upon activation of the norepinephrine-alpha-1 adrenergic receptor signaling pathway, transports as well D-serine than L-glutamate in a (Ca2+)-dependent manner, leading to activation of adjacent NMDAR receptors and therefore regulates the heterosynaptic long-term depression and metaplasticity during initial memory acquisition. Releases the 4-aminobutanoate neurotransmitter in a (Ca2+)-dependent manner, and participates in its tonic release from cerebellar glial cells. The polypeptide is Bestrophin-1 (Homo sapiens (Human)).